The sequence spans 60 residues: LKCNKLIPLAYKTCPAGKNLCYKMFMVSNKTVPVKRGCIDVCPKNSLVLKYVCCNTDRCN.

4 disulfides stabilise this stretch: cysteine 3–cysteine 21, cysteine 14–cysteine 38, cysteine 42–cysteine 53, and cysteine 54–cysteine 59.

This sequence belongs to the three-finger toxin family. Short-chain subfamily. Type IA cytotoxin sub-subfamily. Monomer in solution; Homodimer and oligomer in the presence of negatively charged lipids forming a pore with a size ranging between 20 and 30 Angstroms. In terms of tissue distribution, expressed by the venom gland.

The protein resides in the secreted. It is found in the target cell membrane. Its function is as follows. Shows cytolytic activity on many different cells by forming pore in lipid membranes. In vivo, increases heart rate or kills the animal by cardiac arrest. In addition, it binds to heparin with high affinity, interacts with Kv channel-interacting protein 1 (KCNIP1) in a calcium-independent manner, and binds to integrin alpha-V/beta-3 (ITGAV/ITGB3) with moderate affinity. The protein is Cytotoxin 3 of Naja naja (Indian cobra).